The primary structure comprises 150 residues: Deoxyuridine 5'-triphosphate nucleotidohydrolase (150 aa).

Residues 70 to 72 (RSG), Asn83, and 87 to 89 (TID) each bind substrate.

The protein belongs to the dUTPase family. Mg(2+) serves as cofactor.

It carries out the reaction dUTP + H2O = dUMP + diphosphate + H(+). The protein operates within pyrimidine metabolism; dUMP biosynthesis; dUMP from dCTP (dUTP route): step 2/2. Functionally, this enzyme is involved in nucleotide metabolism: it produces dUMP, the immediate precursor of thymidine nucleotides and it decreases the intracellular concentration of dUTP so that uracil cannot be incorporated into DNA. This is Deoxyuridine 5'-triphosphate nucleotidohydrolase from Desulfotalea psychrophila (strain LSv54 / DSM 12343).